The following is a 100-amino-acid chain: Large ribosomal subunit protein uL23 (100 aa).

This sequence belongs to the universal ribosomal protein uL23 family. In terms of assembly, part of the 50S ribosomal subunit. Contacts protein L29, and trigger factor when it is bound to the ribosome.

Its function is as follows. One of the early assembly proteins it binds 23S rRNA. One of the proteins that surrounds the polypeptide exit tunnel on the outside of the ribosome. Forms the main docking site for trigger factor binding to the ribosome. The sequence is that of Large ribosomal subunit protein uL23 from Salmonella paratyphi A (strain ATCC 9150 / SARB42).